The chain runs to 137 residues: ATP synthase epsilon chain (137 aa).

Belongs to the ATPase epsilon chain family. As to quaternary structure, F-type ATPases have 2 components, CF(1) - the catalytic core - and CF(0) - the membrane proton channel. CF(1) has five subunits: alpha(3), beta(3), gamma(1), delta(1), epsilon(1). CF(0) has three main subunits: a, b and c.

The protein localises to the cellular thylakoid membrane. In terms of biological role, produces ATP from ADP in the presence of a proton gradient across the membrane. This is ATP synthase epsilon chain (atpC) from Synechococcus elongatus (strain ATCC 33912 / PCC 7942 / FACHB-805) (Anacystis nidulans R2).